The sequence spans 262 residues: MVIKTSLTVLILGVLIAEVFCAGHSQCNRRENPVNPFSYYETVNGKETLRMCPAAQIFNKTSCHCNAVEVVPGSGMNFRSGQQNFQWSSSGSSGGGMGASGMGANGMVASGIGASGIGTSGMGASNTNAMMNAFLGGSKAGSGNIATSGTSSGKFKVTLPFNPLILKWTKSSNGGWGAETGSSGGMNSQSSGSQSGSWGSSSGSWGGSSGSMGSSGNWLNDLQFMGNMRPQGINFPAPIMNIKVSGTGGSSQGVLRAARPHP.

The first 21 residues, 1–21 (MVIKTSLTVLILGVLIAEVFC), serve as a signal peptide directing secretion. A glycan (N-linked (GlcNAc...) asparagine) is linked at asparagine 59. The tract at residues 172-212 (SNGGWGAETGSSGGMNSQSSGSQSGSWGSSSGSWGGSSGSM) is disordered. The segment covering 174–184 (GGWGAETGSSG) has biased composition (gly residues). Positions 185–203 (GMNSQSSGSQSGSWGSSSG) are enriched in low complexity.

As to expression, component of the acid-insoluble and acid-soluble organic matrix of calcified layers of the shell (at protein level).

It is found in the secreted. This is Glycine and serine-rich protein 1 from Lottia gigantea (Giant owl limpet).